Reading from the N-terminus, the 357-residue chain is UDP-N-acetylglucosamine--N-acetylmuramyl-(pentapeptide) pyrophosphoryl-undecaprenol N-acetylglucosamine transferase (357 aa).

UDP-N-acetyl-alpha-D-glucosamine contacts are provided by residues 11–13, Asn123, Arg159, Ser187, Ile241, 260–265, and Gln286; these read TGG and ALTVAE.

Belongs to the glycosyltransferase 28 family. MurG subfamily.

The protein resides in the cell inner membrane. It carries out the reaction di-trans,octa-cis-undecaprenyl diphospho-N-acetyl-alpha-D-muramoyl-L-alanyl-D-glutamyl-meso-2,6-diaminopimeloyl-D-alanyl-D-alanine + UDP-N-acetyl-alpha-D-glucosamine = di-trans,octa-cis-undecaprenyl diphospho-[N-acetyl-alpha-D-glucosaminyl-(1-&gt;4)]-N-acetyl-alpha-D-muramoyl-L-alanyl-D-glutamyl-meso-2,6-diaminopimeloyl-D-alanyl-D-alanine + UDP + H(+). Its pathway is cell wall biogenesis; peptidoglycan biosynthesis. Cell wall formation. Catalyzes the transfer of a GlcNAc subunit on undecaprenyl-pyrophosphoryl-MurNAc-pentapeptide (lipid intermediate I) to form undecaprenyl-pyrophosphoryl-MurNAc-(pentapeptide)GlcNAc (lipid intermediate II). This Aromatoleum aromaticum (strain DSM 19018 / LMG 30748 / EbN1) (Azoarcus sp. (strain EbN1)) protein is UDP-N-acetylglucosamine--N-acetylmuramyl-(pentapeptide) pyrophosphoryl-undecaprenol N-acetylglucosamine transferase.